A 201-amino-acid polypeptide reads, in one-letter code: uncharacterized protein (201 aa).

The signal sequence occupies residues 1 to 23 (MKILYFIFVIIINILLILNHVKS). Topologically, residues 24-178 (KYNTFIFENT…GNYGEDPQRN (155 aa)) are extracellular. N-linked (GlcNAc...) asparagine glycans are attached at residues Asn114 and Asn134. A disordered region spans residues 122–157 (TPETPSPTENAPNTSGGSSEGNHYTYKSSSSSSEHI). Residues 123–148 (PETPSPTENAPNTSGGSSEGNHYTYK) are compositionally biased toward polar residues. Residues 179-199 (IGISLSSSLIFISILFLIIFI) form a helical membrane-spanning segment. Residues 200–201 (NN) are Cytoplasmic-facing.

The protein localises to the membrane. This is an uncharacterized protein from Dictyostelium discoideum (Social amoeba).